The primary structure comprises 1722 residues: Lymphocyte antigen 75 (1722 aa).

An N-terminal signal peptide occupies residues 1-27; sequence MRTGWATPRRPAGLLMLLFWFFDLAEP. The Extracellular segment spans residues 28–1666; it reads SGRAANDPFT…VVCKVPLGPD (1639 aa). The Ricin B-type lectin domain occupies 33–156; the sequence is NDPFTIVHGN…ESLCDQPYHE (124 aa). A glycan (N-linked (GlcNAc...) asparagine) is linked at asparagine 135. The Fibronectin type-II domain maps to 164 to 211; it reads SYGRPCEFPFLIDGTWHHDCILDEDHSGPWCATTLNYEYDRKWGICLK. Intrachain disulfides connect cysteine 169–cysteine 194, cysteine 183–cysteine 209, cysteine 247–cysteine 340, and cysteine 317–cysteine 332. Residues 225–341 enclose the C-type lectin 1 domain; that stretch reads QFGSCYQFNT…CEAQLPYVCR (117 aa). Asparagine 345 and asparagine 377 each carry an N-linked (GlcNAc...) asparagine glycan. 4 consecutive C-type lectin domains span residues 368–486, 493–625, 652–778, and 818–931; these read NNGF…YVCK, NDAS…ICKK, ASLS…IYLR, and IEGS…FICE. Disulfide bonds link cysteine 389-cysteine 485 and cysteine 462-cysteine 477. The N-linked (GlcNAc...) asparagine glycan is linked to asparagine 529. A disulfide bridge connects residues cysteine 597 and cysteine 614. Disulfide bonds link cysteine 840/cysteine 930 and cysteine 904/cysteine 922. Residues asparagine 843 and asparagine 865 are each glycosylated (N-linked (GlcNAc...) asparagine). Tyrosine 933 carries the phosphotyrosine modification. N-linked (GlcNAc...) asparagine glycosylation is found at asparagine 934, asparagine 1076, and asparagine 1103. One can recognise a C-type lectin 6 domain in the interval 958-1091; sequence FQNKCFLKIK…ERHFVSLCQK (134 aa). Cysteine 1060 and cysteine 1080 form a disulfide bridge. In terms of domain architecture, C-type lectin 7 spans 1110 to 1222; sequence YLNNLYKIIP…DNQPGAICYY (113 aa). Residues cysteine 1197 and cysteine 1211 are joined by a disulfide bond. 3 N-linked (GlcNAc...) asparagine glycosylation sites follow: asparagine 1225, asparagine 1320, and asparagine 1392. One can recognise a C-type lectin 8 domain in the interval 1251–1374; sequence FQNCCYNFII…VIEEAVYFHQ (124 aa). C-type lectin domains follow at residues 1401-1513 and 1542-1661; these read YEDG…ICYK and YKGH…VCKV. A disulfide bond links cysteine 1488 and cysteine 1502. N-linked (GlcNAc...) asparagine glycosylation is found at asparagine 1593 and asparagine 1626. Cysteine 1635 and cysteine 1650 are disulfide-bonded. The chain crosses the membrane as a helical span at residues 1667-1691; that stretch reads YTAIAIIVATLSILVLMGGLIWFLF. The Cytoplasmic portion of the chain corresponds to 1692-1722; that stretch reads QRHRLHLAGFSSVRYAQGVNEDEIMLPSFHD. Residues serine 1703 and serine 1719 each carry the phosphoserine modification.

Post-translationally, N-glycosylated. Expressed in spleen, thymus, colon and peripheral blood lymphocytes. Detected in myeloid and B-lymphoid cell lines. Isoform 2 and isoform 3 are expressed in malignant Hodgkin lymphoma cells called Hodgkin and Reed-Sternberg (HRS) cells.

The protein resides in the membrane. Functionally, acts as an endocytic receptor to direct captured antigens from the extracellular space to a specialized antigen-processing compartment. Causes reduced proliferation of B-lymphocytes. The protein is Lymphocyte antigen 75 (LY75) of Homo sapiens (Human).